The primary structure comprises 460 residues: Probable lipase C14C8.15 (460 aa).

Over 1 to 16 (MTLNGNIMKYCLEKGE) the chain is Cytoplasmic. The helical; Signal-anchor for type II membrane protein transmembrane segment at 17 to 37 (ILISFLLIALESMFRICTVIL) threads the bilayer. Topologically, residues 38-460 (PSPLRNWFYE…LVDGVMNHTI (423 aa)) are lumenal. Residue Ser214 is the Nucleophile of the active site. Residue Asn308 is glycosylated (N-linked (GlcNAc...) asparagine). Residues Asp382 and His408 each act as charge relay system in the active site. N-linked (GlcNAc...) asparagine glycosylation occurs at Asn457.

It belongs to the AB hydrolase superfamily. Lipase family.

The protein localises to the golgi apparatus. It is found in the membrane. In terms of biological role, probable lipase. The chain is Probable lipase C14C8.15 from Schizosaccharomyces pombe (strain 972 / ATCC 24843) (Fission yeast).